A 487-amino-acid polypeptide reads, in one-letter code: ATP synthase subunit beta 1 (487 aa).

ATP is bound at residue 162–169 (GGAGVGKT).

This sequence belongs to the ATPase alpha/beta chains family. In terms of assembly, F-type ATPases have 2 components, CF(1) - the catalytic core - and CF(0) - the membrane proton channel. CF(1) has five subunits: alpha(3), beta(3), gamma(1), delta(1), epsilon(1). CF(0) has three main subunits: a(1), b(2) and c(9-12). The alpha and beta chains form an alternating ring which encloses part of the gamma chain. CF(1) is attached to CF(0) by a central stalk formed by the gamma and epsilon chains, while a peripheral stalk is formed by the delta and b chains.

The protein resides in the cell inner membrane. It catalyses the reaction ATP + H2O + 4 H(+)(in) = ADP + phosphate + 5 H(+)(out). Produces ATP from ADP in the presence of a proton gradient across the membrane. The catalytic sites are hosted primarily by the beta subunits. This chain is ATP synthase subunit beta 1, found in Gluconobacter oxydans (strain 621H) (Gluconobacter suboxydans).